Reading from the N-terminus, the 578-residue chain is Transmembrane protein 121B (578 aa).

Disordered stretches follow at residues 1-84 (MRPA…ESLS) and 106-129 (AGPAPVAFSSSAATSSSTSTPTSS). Low complexity-rich tracts occupy residues 8 to 17 (PRSVSSASGS) and 44 to 53 (GDSSTSTSTS). Over residues 54–67 (RGGGGGRRGGGGGS) the composition is skewed to gly residues. Position 167 is a phosphoserine (serine 167). Positions 529 to 557 (RARGGYGAPPSAPPPPPPPPQGGSQLGHC) are disordered. The segment covering 538-549 (PSAPPPPPPPPQ) has biased composition (pro residues). Serine 552 is modified (phosphoserine).

This sequence belongs to the TMEM121 family. As to expression, widely expressed, especially in adult heart, brain, prostate, testes, peripherical blood leukocytes and fetal brain.

The polypeptide is Transmembrane protein 121B (Homo sapiens (Human)).